Here is a 322-residue protein sequence, read N- to C-terminus: Alanine dehydrogenase (322 aa).

Residue K65 is the Proton donor/acceptor of the active site. Residues R108, T135–Q136, D157–R159, G217–D219, K223, and S290 each bind NAD(+).

Belongs to the ornithine cyclodeaminase/mu-crystallin family. Archaeal alanine dehydrogenase subfamily. In terms of assembly, homodimer.

The catalysed reaction is L-alanine + NAD(+) + H2O = pyruvate + NH4(+) + NADH + H(+). In terms of biological role, catalyzes the NAD(+)-dependent oxidative deamination of L-alanine to pyruvate, and the reverse reaction, the reductive amination of pyruvate. Its physiological role is not known. Cannot use NADP(+) instead of NAD(+) as a cosubstrate. In the deamination direction, can also efficiently use L-2-aminobutyrate as substrate. In the reductive amination direction, also exhibits high activity with 2-oxobutyrate and oxaloacetate as substrate. In contrast to bacterial homologs, does not exhibit any ornithine cyclodeaminase activity. This Archaeoglobus fulgidus (strain ATCC 49558 / DSM 4304 / JCM 9628 / NBRC 100126 / VC-16) protein is Alanine dehydrogenase.